A 680-amino-acid polypeptide reads, in one-letter code: DNA-directed RNA polymerase subunit beta' (680 aa).

C69, C71, C87, and C90 together coordinate Zn(2+). The Mg(2+) site is built by D489, D491, and D493.

This sequence belongs to the RNA polymerase beta' chain family. RpoC1 subfamily. In terms of assembly, in plastids the minimal PEP RNA polymerase catalytic core is composed of four subunits: alpha, beta, beta', and beta''. When a (nuclear-encoded) sigma factor is associated with the core the holoenzyme is formed, which can initiate transcription. The cofactor is Mg(2+). It depends on Zn(2+) as a cofactor.

It is found in the plastid. Its subcellular location is the chloroplast. It catalyses the reaction RNA(n) + a ribonucleoside 5'-triphosphate = RNA(n+1) + diphosphate. In terms of biological role, DNA-dependent RNA polymerase catalyzes the transcription of DNA into RNA using the four ribonucleoside triphosphates as substrates. This chain is DNA-directed RNA polymerase subunit beta', found in Barbarea verna (Land cress).